The sequence spans 705 residues: Ovotransferrin (705 aa).

Residues 1 to 19 (MKLILCTVLSLGIAAVCFA) form the signal peptide. Transferrin-like domains lie at 26–352 (IRWC…SMRK) and 364–689 (IQWC…SLKT). Cystine bridges form between Cys-29/Cys-64 and Cys-39/Cys-55. Asp-79 and Tyr-111 together coordinate Fe(3+). 4 disulfides stabilise this stretch: Cys-134–Cys-216, Cys-179–Cys-193, Cys-190–Cys-201, and Cys-247–Cys-261. Hydrogencarbonate is bound by residues Thr-136, Arg-140, Ala-142, and Gly-143. Residue Tyr-210 coordinates Fe(3+). Fe(3+) is bound at residue His-269. Residues 352 to 360 (KDQLTPSPR) form a connecting region region. Disulfide bonds link Cys-367-Cys-399 and Cys-377-Cys-390. Residues Asp-414 and Tyr-450 each coordinate Fe(3+). Intrachain disulfides connect Cys-424/Cys-699, Cys-440/Cys-662, Cys-473/Cys-549, Cys-497/Cys-690, Cys-507/Cys-521, Cys-518/Cys-532, and Cys-589/Cys-603. Positions 475, 479, 481, and 482 each coordinate hydrogencarbonate. Asn-492 is a glycosylation site (N-linked (GlcNAc...) asparagine). Position 543 (Tyr-543) interacts with Fe(3+). His-611 provides a ligand contact to Fe(3+).

This sequence belongs to the transferrin family. Monomer. Post-translationally, different forms of hen transferrin are distinguished by their carbohydrate composition. Ovotransferrin and embryo serum transferrin but not adult serum transferrin, have bisecting N-acetylglucosamine. Transferrin secreted by embryo hepatocytes in primary culture is marked by the presence of (alpha1-6) fucosylation of the core N-acetylglucosamine. Serum transferrins also differ in the number of attached neuraminic acid residues. In both embryo forms, sialylation occurs on the Man (alpha 1-3)-linked antennae. Expressed in the magnum of the oviduct (at protein level).

Its subcellular location is the secreted. In terms of biological role, transferrins are iron binding transport proteins which can bind two Fe(3+) ions in association with the binding of an anion, usually bicarbonate. Responsible for the transport of iron from sites of absorption and heme degradation to those of storage and utilization. There are two forms of hen transferrin, ovotransferrin, found in the ovoducts and, serum transferrin, secreted by the liver. Serum transferrin may also have a role in stimulating cell proliferation and is regulated by iron levels. Ovotransferrin has a bacteriostatic function and, is not controlled by iron levels. The sequence is that of Ovotransferrin from Gallus gallus (Chicken).